A 760-amino-acid chain; its full sequence is Endoplasmin homolog (760 aa).

Positions 1–23 are cleaved as a signal peptide; the sequence is MRFLLVGFVALLAVSAFIPNVYA. Residues Asn-95, Asp-137, Asn-150, and Phe-187 each coordinate ATP. An N-linked (GlcNAc...) asparagine glycan is attached at Asn-95. Asn-423 carries N-linked (GlcNAc...) asparagine glycosylation. The disordered stretch occupies residues 727–760; the sequence is SQDAQVETEQHIEEAEPEPEAAEETTIEEEHSEL. Positions 741–760 are enriched in acidic residues; sequence AEPEPEAAEETTIEEEHSEL. The Prevents secretion from ER signature appears at 757–760; it reads HSEL.

Belongs to the heat shock protein 90 family.

The protein localises to the endoplasmic reticulum lumen. Its function is as follows. Molecular chaperone that functions in the processing and transport of secreted proteins. This Caenorhabditis elegans protein is Endoplasmin homolog.